The sequence spans 373 residues: MVSNMRSTRTALTGWVGIFLVLSLQQTSCAGLPHNVDTHHILTFNPSPISADGVPLSEVPNSPTTELSTTVATKTAVPTTESTSSSEAHRNSSHKIPDIICDREEVFVFLNNTGRILCDLIVDPPSDDEWSNFALDVTFNPIEYHANEKNVEVARVAGLYGVPGSDYAYPRKSELISSIRRDPQGSFWTSPTPRGNKYFIWINKTMHTMGVEVRNVDYKDNGYFQVILRDRFNRPLVEKHIYMRVCQRPASVDVLAPPVLSGENYKASCIVRHFYPPGSVYVSWRRNGNIATPRKDRDGSFWWFESGRGATLVSTITLGNSGLESPPKVSCLVAWRQGDMISTSNATAVPTVYYHPRISLAFKDGSLQDHRSL.

An N-terminal signal peptide occupies residues 1 to 25 (MVSNMRSTRTALTGWVGIFLVLSLQ). The segment at 58-93 (EVPNSPTTELSTTVATKTAVPTTESTSSSEAHRNSS) is disordered. A compositionally biased stretch (polar residues) spans 59–68 (VPNSPTTELS). A compositionally biased stretch (low complexity) spans 69–80 (TTVATKTAVPTT). N-linked (GlcNAc...) asparagine; by host glycans are attached at residues Asn91, Asn111, Asn203, and Asn345. The 99-residue stretch at 249 to 347 (PASVDVLAPP…GDMISTSNAT (99 aa)) folds into the Ig-like domain.

This sequence belongs to the herpesviridae glycoprotein C family.

This Gallus gallus (Chicken) protein is Envelope glycoprotein C homolog (gC).